The chain runs to 367 residues: mRNA-decapping enzyme-like protein (367 aa).

Disordered regions lie at residues 144–179 (PKAS…RDAP), 196–246 (NTAS…SSSP), and 299–333 (PNNA…PTGP). A compositionally biased stretch (polar residues) spans 196-211 (NTASGSASGPYQSSAI). The segment covering 212-234 (PHQPHQPHQPTIAPPVAAAAPPQ) has biased composition (low complexity). Positions 299 to 309 (PNNASHQQRSY) are enriched in polar residues. Residues 315–331 (QPFPPPTPPPSLAPAPT) are compositionally biased toward pro residues.

Belongs to the DCP1 family. As to quaternary structure, homodimer. Component of the decapping complex. Interacts with DCP2 and DCP5. Interacts with BCHA1. In terms of tissue distribution, expressed in seedlings, mostly in root tips, root hairs, and the vascular system. Also present in roots, leaves, stems, and flowers.

The protein resides in the cytoplasm. The protein localises to the P-body. As a component of the decapping complex, involved in the degradation of mRNAs. Essential for postembryonic development. This Arabidopsis thaliana (Mouse-ear cress) protein is mRNA-decapping enzyme-like protein.